A 1484-amino-acid polypeptide reads, in one-letter code: Actin cytoskeleton-regulatory complex protein pan1 (1484 aa).

Polar residues predominate over residues 1-16 (MYSSSNSFLGGANSTR). The disordered stretch occupies residues 1 to 100 (MYSSSNSFLG…QTQPTGFPAS (100 aa)). Residues 17 to 47 (PGQQPYMQQQPPFSQFGQQQPQNQQTGLAPQ) are compositionally biased toward low complexity. Residues 49-67 (TGYNPQFSALGASQLQPQA) show a composition bias toward polar residues. Residues 173–261 (DQAKFEQLFK…ETIKNEVSSM (89 aa)) form the EH 1 domain. Residues 205 to 240 (LPGSDLSRIWVLSDTTKSGQLLFPEFALAMYLCNLR) enclose the EF-hand 1 domain. Disordered regions lie at residues 289–331 (LLEN…GYQA) and 351–384 (GQASSQNLQPPQMGILNNPQPTGYTGPRPPMPPM). Residues 296–305 (PPAPQQPRPQ) show a composition bias toward pro residues. Positions 306-316 (QPSNSQLLSQL) are enriched in low complexity. Polar residues predominate over residues 352 to 370 (QASSQNLQPPQMGILNNPQ). Residues 460–549 (EKKIYDDLFR…PELIPPSTRN (90 aa)) enclose the EH 2 domain. The 36-residue stretch at 493–528 (LARNDLEAIWTLADPHNRGRLNMDEFAVAMHLIYRK) folds into the EF-hand 2 domain. 3 disordered regions span residues 615–643 (AGYRSSARRRVGNSGRTPSPAASQASEEE), 793–866 (RAAE…HERR), and 893–1484 (HIRK…GRVL). A compositionally biased stretch (polar residues) spans 628–639 (SGRTPSPAASQA). Coiled coils occupy residues 635-760 (AASQ…AKAH) and 807-843 (DDEEAATRRLEGENARVKAEREKNDSMTRDVEESVKE). 5 stretches are compositionally biased toward basic and acidic residues: residues 811–866 (AATR…HERR), 894–913 (IRKEEDSRGSSLEPRSRESS), 937–955 (THEDRVAAARERAQRRIAE), 975–1010 (RQERERREREERVKRAEEEDAKREQERQRRIAEEQR), and 1063–1152 (ALKE…ERQL). Coiled coils occupy residues 965-1011 (QTDA…EQRT) and 1052-1165 (SAKT…SSSD). Over residues 1157-1169 (EGLDESSSDEEGP) the composition is skewed to acidic residues. Polar residues predominate over residues 1175–1187 (PQDSTPTQSQVLP). Positions 1192-1208 (PEPPAPPTPVAEPPTVP) are enriched in pro residues. Low complexity predominate over residues 1209–1222 (EPEQTTASSSPESS). Positions 1249–1258 (DYPPPTPPEV) are enriched in pro residues. Residues 1265–1274 (QMPDTQSTNP) are compositionally biased toward polar residues. The segment covering 1310–1329 (ADDDWSAAESDFESSDDEDD) has biased composition (acidic residues). A compositionally biased stretch (polar residues) spans 1356-1371 (MDTQSPSSKSATPVQG). Over residues 1382–1393 (AEIEPSSVADGA) the composition is skewed to low complexity. Pro residues-rich tracts occupy residues 1394–1415 (SPPPPPPPPPPPPPAAAPPPLP) and 1422–1445 (GIPPPPPPPMAPPAPPPPPGPPAA). Residues 1452–1469 (DRSALLASIQAGKGLRKV) form the WH2 domain. The segment covering 1472–1484 (NDRSTSTSAGRVL) has biased composition (polar residues).

It belongs to the PAN1 family. Component of the PAN1 actin cytoskeleton-regulatory complex.

The protein resides in the cell membrane. It localises to the endosome membrane. The protein localises to the cytoplasm. It is found in the cytoskeleton. Its subcellular location is the actin patch. Its function is as follows. Component of the PAN1 actin cytoskeleton-regulatory complex required for the internalization of endosomes during actin-coupled endocytosis. The complex links the site of endocytosis to the cell membrane-associated actin cytoskeleton. Mediates uptake of external molecules and vacuolar degradation of plasma membrane proteins. Plays a role in the proper organization of the cell membrane-associated actin cytoskeleton and promotes its destabilization. The sequence is that of Actin cytoskeleton-regulatory complex protein pan1 (pan1) from Emericella nidulans (strain FGSC A4 / ATCC 38163 / CBS 112.46 / NRRL 194 / M139) (Aspergillus nidulans).